The chain runs to 2513 residues: Highly reducing polyketide synthase ACRTS2 (2513 aa).

The Ketosynthase family 3 (KS3) domain occupies 4 to 429; it reads DTPVAIIGVS…GSSSAVIIDR (426 aa). Residues Cys174, His313, and His353 each act as for beta-ketoacyl synthase activity in the active site. A malonyl-CoA:ACP transacylase (MAT) domain region spans residues 547-875; it reads VFTGQGAQYA…NYLPSLLRGT (329 aa). The active-site For malonyltransferase activity is the Ser635. The interval 942-1074 is N-terminal hotdog fold; it reads HALIGRKAPS…GKIEPEIADL (133 aa). Residues 942-1253 form a dehydratase (DH) domain region; sequence HALIGRKAPS…TFRTVSSADD (312 aa). The PKS/mFAS DH domain occupies 942-1254; the sequence is HALIGRKAPS…FRTVSSADDQ (313 aa). His974 serves as the catalytic Proton acceptor; for dehydratase activity. Positions 1092–1254 are C-terminal hotdog fold; the sequence is AGVIEHDMDN…FRTVSSADDQ (163 aa). Asp1161 serves as the catalytic Proton donor; for dehydratase activity. Residues 1407–1600 are methyltransferase (CMet) domain; it reads SKIIGYLTEN…IPTNYRTDNP (194 aa). Residues 1816–2127 form an enoylreductase (ER) domain region; that stretch reads GSPDTIYFRR…SRDHIGRLVV (312 aa). The segment at 2152-2327 is ketoreductase (KR) domain; it reads ATYLVAGGTR…YTVSIGLPVV (176 aa). The 78-residue stretch at 2433–2510 folds into the Carrier domain; it reads DPLTGLIEAL…ALAVNILAQR (78 aa). Ser2470 carries the O-(pantetheine 4'-phosphoryl)serine modification.

Its pathway is mycotoxin biosynthesis. Highly reducing polyketide synthase; part of the gene cluster that mediates the biosynthesis of the host-selective toxins (HSTs) ACR-toxins responsible for brown spot of rough lemon disease by the rough lemon pathotype. ACR-toxins cause uncoupling of mitochondrial oxidative-phosphorylation similar to that of classic protonophore. The structure of the major form of ACR-toxin (ACR-toxin I) consists of an alpha-dihydropyrone ring in a 19-carbon polyalcohol, a typical polyketide structure. Minor toxins were characterized as having a pyrone ring with polyalcohol side chains different in length and showing weaker toxicity. The highly reducing polyketide synthase ACRTS2 has all necessary enzymatic domains for multiple cycles of condensation and beta-keto processing. The cytochrome P450 monooxygenase ACRTS1 has also been shown to be essential for ACR-toxin biosynthesis, however its exact role in the pathway has not been elucidated yet. In Alternaria alternata (Alternaria rot fungus), this protein is Highly reducing polyketide synthase ACRTS2.